The sequence spans 467 residues: Acetaldehyde dehydrogenase (acetylating) EutE (467 aa).

The interval 1–19 (MNQQDIEQVVKAVLLKMKD) is targets protein to the BMC.

It belongs to the EutE/PduP family. Interacts with EutS, which targets it to the interior of the BMC.

The protein resides in the bacterial microcompartment. The catalysed reaction is acetaldehyde + NAD(+) + CoA = acetyl-CoA + NADH + H(+). Its pathway is amine and polyamine degradation; ethanolamine degradation. Acts as the second step in ethanolamine degradation by converting acetaldehyde into acetyl-CoA. Has a very strong preference for NAD(+) over NADP(+) in both catalytic directions. May play a role in bacterial microcompartment (BMC) assembly or maintenance. Directly targeted to the BMC. In terms of biological role, expression of the eut operon allows this bacteria to use ethanolamine (EA) as a carbon, nitrogen and energy source. It relies on cobalamin (vitamin B12) both as a cofactor for the ethanolamine ammonia-lyase (EAL) activity and to induce the operon. EA enhances bacterial survival in macrophages in a concentration-dependent manner, suggesting it is an important nutrient during infection. The polypeptide is Acetaldehyde dehydrogenase (acetylating) EutE (Salmonella typhimurium (strain LT2 / SGSC1412 / ATCC 700720)).